The primary structure comprises 276 residues: NH(3)-dependent NAD(+) synthetase (276 aa).

Residue 43–50 participates in ATP binding; the sequence is GISGGVDS. Position 49 (aspartate 49) interacts with Mg(2+). Arginine 146 serves as a coordination point for deamido-NAD(+). Threonine 166 lines the ATP pocket. Position 171 (glutamate 171) interacts with Mg(2+). Residues lysine 179 and aspartate 186 each contribute to the deamido-NAD(+) site. Positions 195 and 217 each coordinate ATP. A deamido-NAD(+)-binding site is contributed by 266-267; it reads HK.

This sequence belongs to the NAD synthetase family. In terms of assembly, homodimer.

The catalysed reaction is deamido-NAD(+) + NH4(+) + ATP = AMP + diphosphate + NAD(+) + H(+). It functions in the pathway cofactor biosynthesis; NAD(+) biosynthesis; NAD(+) from deamido-NAD(+) (ammonia route): step 1/1. Functionally, catalyzes the ATP-dependent amidation of deamido-NAD to form NAD. Uses ammonia as a nitrogen source. The polypeptide is NH(3)-dependent NAD(+) synthetase (Shewanella amazonensis (strain ATCC BAA-1098 / SB2B)).